Here is a 249-residue protein sequence, read N- to C-terminus: 2,3-bisphosphoglycerate-dependent phosphoglycerate mutase (249 aa).

Substrate contacts are provided by residues 8–15, 21–22, Arg-60, 87–90, Lys-98, 114–115, and 183–184; these read RHGESVWN, TG, ERHY, RR, and GN. His-9 serves as the catalytic Tele-phosphohistidine intermediate. Glu-87 functions as the Proton donor/acceptor in the catalytic mechanism.

The protein belongs to the phosphoglycerate mutase family. BPG-dependent PGAM subfamily.

It catalyses the reaction (2R)-2-phosphoglycerate = (2R)-3-phosphoglycerate. It participates in carbohydrate degradation; glycolysis; pyruvate from D-glyceraldehyde 3-phosphate: step 3/5. Catalyzes the interconversion of 2-phosphoglycerate and 3-phosphoglycerate. This is 2,3-bisphosphoglycerate-dependent phosphoglycerate mutase from Chloroherpeton thalassium (strain ATCC 35110 / GB-78).